Consider the following 479-residue polypeptide: Gamma-aminobutyric acid receptor subunit rho-1 (479 aa).

The first 21 residues, 1-21, serve as a signal peptide directing secretion; it reads MLAVPNMRFGIFLLWWGWVLA. At 22 to 280 the chain is on the extracellular side; it reads TESRMHWPGR…LYINFTLRRH (259 aa). Residues 32–55 form a disordered region; sequence EVHEMSKKGRPQRQRREVHEDAHK. A compositionally biased stretch (basic and acidic residues) spans 45–55; the sequence is QRREVHEDAHK. Arg125 is a binding site for 4-aminobutanoate. Asn140 carries an N-linked (GlcNAc...) asparagine glycan. Position 189 (Ser189) interacts with 4-aminobutanoate. Cys198 and Cys212 are oxidised to a cystine. Residue Glu217 coordinates 4-aminobutanoate. Residues Asn234 and Asn274 are each glycosylated (N-linked (GlcNAc...) asparagine). A helical membrane pass occupies residues 281-301; that stretch reads IFFFLLQTYFPATLMVMLSWV. Residues 302 to 313 are Cytoplasmic-facing; sequence SFWIDRRAVPAR. The chain crosses the membrane as a helical span at residues 314-334; it reads VPLGITTVLTMSTIITGVNAS. Residues 335–345 lie on the Extracellular side of the membrane; the sequence is MPRVSYIKAVD. Residues 346–366 traverse the membrane as a helical segment; that stretch reads IYLWVSFVFVFLSVLEYAAVN. Over 367–457 the chain is Cytoplasmic; the sequence is YLTTVQERKE…MRIDTHAIDK (91 aa). A helical transmembrane segment spans residues 458–478; the sequence is YSRIIFPAAYILFNLIYWSIF. A topological domain (extracellular) is located at residue Ser479.

This sequence belongs to the ligand-gated ion channel (TC 1.A.9) family. Gamma-aminobutyric acid receptor (TC 1.A.9.5) subfamily. GABRR1 sub-subfamily. As to quaternary structure, three rho subunits (rho-1/GBRR1, rho-2/GBRR2 and rho-3/GBRR3) coassemble either to form functional homopentamers or heteropentamers. Rho-1/GBRR1 subunits can also associate with alpha-1/GBRA1 subunits to form a functional GABAAR. Interacts with SQSTM1. As to expression, highly expressed in the retina. Expressed in a lesser extent in brain, lung and thymus.

The protein resides in the postsynaptic cell membrane. It localises to the cell membrane. The catalysed reaction is chloride(in) = chloride(out). With respect to regulation, inhibited by TPMPA, a rho-specific antagonist, when forming a homopentamer. In contrast with other GABAARs, rho-1 GABAAR is not inhibited by bicuculline, when forming a homopentamer. Its function is as follows. Rho subunit of the pentameric ligand-gated chloride channels responsible for mediating the effects of gamma-aminobutyric acid (GABA), the major inhibitory neurotransmitter in the brain. Rho-containing GABA-gated chloride channels are a subclass of GABA(A) receptors (GABAARs) entirely composed of rho subunits, where GABA molecules bind at the rho intersubunit interfaces. When activated by GABA, rho-GABAARs selectively allow the flow of chloride anions across the cell membrane down their electrochemical gradient. Rho-1 subunits are primarily expressed in retina where rho-1-containing GABAARs may play a role in retinal neurotransmission. Rho-1 GABAARs are also involved in neuronal tonic (extrasynaptic) and phasic (synaptic) transmission in the Purkinje neurons of the cerebellum. Rho-1 GABAARs may also contribute to the regulation of glial development in the cerebellum by controlling extrasynaptic transmission. The sequence is that of Gamma-aminobutyric acid receptor subunit rho-1 from Homo sapiens (Human).